The chain runs to 175 residues: Ribulose bisphosphate carboxylase small subunit, chloroplastic (175 aa).

A chloroplast-targeting transit peptide spans M1 to R46. Positions E60–Y64 are interaction with large subunit.

It belongs to the RuBisCO small chain family. Heterohexadecamer of 8 large and 8 small subunits.

It is found in the plastid. It localises to the chloroplast. Its function is as follows. RuBisCO catalyzes two reactions: the carboxylation of D-ribulose 1,5-bisphosphate, the primary event in carbon dioxide fixation, as well as the oxidative fragmentation of the pentose substrate. Both reactions occur simultaneously and in competition at the same active site. Although the small subunit is not catalytic it is essential for maximal activity. This Oryza sativa subsp. indica (Rice) protein is Ribulose bisphosphate carboxylase small subunit, chloroplastic.